A 462-amino-acid chain; its full sequence is Argininosuccinate lyase (462 aa).

It belongs to the lyase 1 family. Argininosuccinate lyase subfamily.

Its subcellular location is the cytoplasm. It catalyses the reaction 2-(N(omega)-L-arginino)succinate = fumarate + L-arginine. Its pathway is amino-acid biosynthesis; L-arginine biosynthesis; L-arginine from L-ornithine and carbamoyl phosphate: step 3/3. This is Argininosuccinate lyase from Xanthobacter autotrophicus (strain ATCC BAA-1158 / Py2).